Consider the following 480-residue polypeptide: Na(+)/H(+) antiporter NhaA (480 aa).

Helical transmembrane passes span 34 to 54 (VGGVLLLVATVTALVWANIPA), 76 to 96 (LSVAHWAADGLLAVFFFVAGI), 113 to 133 (AVLPVVAALCGMAVPALVYTL), 144 to 164 (GWAVPTATDIAFALAVLAVIG), 174 to 194 (FLLTLAVVDDLFAILIIAIFF), 197 to 217 (RINFAALGGAVAGLAVFWLLL), 223 to 243 (GWYVYVPLAVVVWALMYNSGV), 282 to 302 (GLAVPLFALFSAGVVVSGGAL), 312 to 332 (LGVVLGLVVGKTLGIFGSTWL), 350 to 370 (IFAVASLAGIGFTVSLLIGEL), and 381 to 401 (EVKAAVLTGSLIAALCATVLL). A disordered region spans residues 454 to 480 (AAEKAAAARHGGAEVPGGAGEEDGRPA).

Belongs to the NhaA Na(+)/H(+) (TC 2.A.33) antiporter family.

It localises to the cell membrane. The catalysed reaction is Na(+)(in) + 2 H(+)(out) = Na(+)(out) + 2 H(+)(in). Functionally, na(+)/H(+) antiporter that extrudes sodium in exchange for external protons. In Streptomyces antibioticus, this protein is Na(+)/H(+) antiporter NhaA.